Reading from the N-terminus, the 151-residue chain is Small ribosomal subunit protein uS15 (151 aa).

Residues 1–20 (MGRMHSNGKGISGSSLPYNR) are disordered.

It belongs to the universal ribosomal protein uS15 family. Component of the small ribosomal subunit. Part of the small subunit (SSU) processome, composed of more than 70 proteins and the RNA chaperone small nucleolar RNA (snoRNA) U3.

Its subcellular location is the cytoplasm. It localises to the nucleus. It is found in the nucleolus. Component of the small ribosomal subunit. The ribosome is a large ribonucleoprotein complex responsible for the synthesis of proteins in the cell. Part of the small subunit (SSU) processome, first precursor of the small eukaryotic ribosomal subunit. During the assembly of the SSU processome in the nucleolus, many ribosome biogenesis factors, an RNA chaperone and ribosomal proteins associate with the nascent pre-rRNA and work in concert to generate RNA folding, modifications, rearrangements and cleavage as well as targeted degradation of pre-ribosomal RNA by the RNA exosome. The sequence is that of Small ribosomal subunit protein uS15 (rps13) from Dictyostelium discoideum (Social amoeba).